The primary structure comprises 593 residues: Putative auxin response factor 15 (593 aa).

A DNA-binding region (TF-B3) is located at residues Phe-126–Arg-228. A PB1 domain is found at Arg-511–Arg-592.

It belongs to the ARF family. As to quaternary structure, homodimers and heterodimers.

It is found in the nucleus. Functionally, auxin response factors (ARFs) are transcriptional factors that bind specifically to the DNA sequence 5'-TGTCTC-3' found in the auxin-responsive promoter elements (AuxREs). Could act as transcriptional activator or repressor. Formation of heterodimers with Aux/IAA proteins may alter their ability to modulate early auxin response genes expression. In Arabidopsis thaliana (Mouse-ear cress), this protein is Putative auxin response factor 15 (ARF15).